Reading from the N-terminus, the 787-residue chain is GPI ethanolamine phosphate transferase 2 (787 aa).

3 N-linked (GlcNAc...) asparagine glycosylation sites follow: N33, N185, and N397. Helical transmembrane passes span 400 to 420 (FLTY…VWNF), 426 to 446 (YIEH…SSFI), and 455 to 475 (WITI…LVVL). N-linked (GlcNAc...) asparagine glycosylation is present at N485. 2 helical membrane passes run 504–524 (HTSV…FPFL) and 536–556 (LLSV…FAIV). A glycan (N-linked (GlcNAc...) asparagine) is linked at N581. Residues 591-611 (LVPIARIFFQICGVSIIILLF) traverse the membrane as a helical segment. N617 is a glycosylation site (N-linked (GlcNAc...) asparagine). The chain crosses the membrane as a helical span at residues 629-651 (VIKFVLLLQTSSANIPLFLIFEI). N669 is a glycosylation site (N-linked (GlcNAc...) asparagine). Transmembrane regions (helical) follow at residues 671-693 (TFFQ…YNGV), 699-719 (IYVV…YWAL), 740-760 (GTCL…WSVF), and 767-787 (YAAW…LGVL).

The protein belongs to the PIGG/PIGN/PIGO family. PIGG subfamily.

The protein resides in the endoplasmic reticulum membrane. It participates in glycolipid biosynthesis; glycosylphosphatidylinositol-anchor biosynthesis. Its function is as follows. Ethanolamine phosphate transferase involved in glycosylphosphatidylinositol-anchor biosynthesis. Transfers ethanolamine phosphate to the GPI second mannose. The polypeptide is GPI ethanolamine phosphate transferase 2 (LAS21) (Kluyveromyces lactis (strain ATCC 8585 / CBS 2359 / DSM 70799 / NBRC 1267 / NRRL Y-1140 / WM37) (Yeast)).